We begin with the raw amino-acid sequence, 198 residues long: Superoxide dismutase [Mn], mitochondrial (198 aa).

Residue His-26 coordinates Mn(2+). A 3'-nitrotyrosine modification is found at Tyr-34. Residues Lys-44 and Lys-51 each carry the N6-acetyllysine; alternate modification. 2 positions are modified to N6-succinyllysine; alternate: Lys-44 and Lys-51. Position 74 (His-74) interacts with Mn(2+). Residue Lys-90 is modified to N6-acetyllysine. 2 positions are modified to N6-acetyllysine; alternate: Lys-98 and Lys-106. An N6-succinyllysine; alternate mark is found at Lys-98 and Lys-106. Residues Asp-159 and His-163 each coordinate Mn(2+). N6-acetyllysine is present on Lys-178.

It belongs to the iron/manganese superoxide dismutase family. As to quaternary structure, homotetramer. Requires Mn(2+) as cofactor. Nitrated under oxidative stress. Nitration coupled with oxidation inhibits the catalytic activity. In terms of processing, acetylation at Lys-98 decreases enzymatic activity. Deacetylated by SIRT3 upon exposure to ionizing radiations or after long fasting. Post-translationally, polyubiquitinated; leading to proteasomal degradation. Deubiquitinated by USP36 which increases protein stability.

It is found in the mitochondrion matrix. The catalysed reaction is 2 superoxide + 2 H(+) = H2O2 + O2. Functionally, destroys superoxide anion radicals which are normally produced within the cells and which are toxic to biological systems. This is Superoxide dismutase [Mn], mitochondrial (SOD2) from Macaca fuscata fuscata (Japanese macaque).